Consider the following 361-residue polypeptide: Putative agmatine deiminase (361 aa).

C354 functions as the Amidino-cysteine intermediate in the catalytic mechanism.

It belongs to the agmatine deiminase family.

The catalysed reaction is agmatine + H2O = N-carbamoylputrescine + NH4(+). The polypeptide is Putative agmatine deiminase (Streptococcus pneumoniae (strain Hungary19A-6)).